A 415-amino-acid polypeptide reads, in one-letter code: DNA polymerase IV 2 (415 aa).

Residues 7–183 (ILHADLDAFY…LPVSLMWGVG (177 aa)) form the UmuC domain. Mg(2+) contacts are provided by aspartate 11 and aspartate 101. The active site involves glutamate 102.

It belongs to the DNA polymerase type-Y family. As to quaternary structure, monomer. It depends on Mg(2+) as a cofactor.

The protein localises to the cytoplasm. The enzyme catalyses DNA(n) + a 2'-deoxyribonucleoside 5'-triphosphate = DNA(n+1) + diphosphate. Functionally, poorly processive, error-prone DNA polymerase involved in untargeted mutagenesis. Copies undamaged DNA at stalled replication forks, which arise in vivo from mismatched or misaligned primer ends. These misaligned primers can be extended by PolIV. Exhibits no 3'-5' exonuclease (proofreading) activity. May be involved in translesional synthesis, in conjunction with the beta clamp from PolIII. This chain is DNA polymerase IV 2 (dinB2), found in Mesorhizobium japonicum (strain LMG 29417 / CECT 9101 / MAFF 303099) (Mesorhizobium loti (strain MAFF 303099)).